Reading from the N-terminus, the 376-residue chain is Ribosomal RNA large subunit methyltransferase G (376 aa).

Belongs to the methyltransferase superfamily. RlmG family.

It localises to the cytoplasm. It carries out the reaction guanosine(1835) in 23S rRNA + S-adenosyl-L-methionine = N(2)-methylguanosine(1835) in 23S rRNA + S-adenosyl-L-homocysteine + H(+). Specifically methylates the guanine in position 1835 (m2G1835) of 23S rRNA. This is Ribosomal RNA large subunit methyltransferase G from Klebsiella pneumoniae subsp. pneumoniae (strain ATCC 700721 / MGH 78578).